We begin with the raw amino-acid sequence, 311 residues long: Probable manganese-dependent inorganic pyrophosphatase (311 aa).

Residues H9, D13, D15, D77, H99, and D151 each coordinate Mn(2+).

Belongs to the PPase class C family. Mn(2+) serves as cofactor.

It localises to the cytoplasm. It catalyses the reaction diphosphate + H2O = 2 phosphate + H(+). This is Probable manganese-dependent inorganic pyrophosphatase from Streptococcus equi subsp. zooepidemicus (strain H70).